Reading from the N-terminus, the 421-residue chain is Glucan 1,3-beta-glucosidase (421 aa).

Positions 1-15 (MKLTKLVALAGAALA) are cleaved as a signal peptide. Glu-213 (proton donor) is an active-site residue. Cystine bridges form between Cys-296–Cys-419 and Cys-321–Cys-347. Glu-313 acts as the Nucleophile in catalysis.

This sequence belongs to the glycosyl hydrolase 5 (cellulase A) family.

The protein localises to the secreted. The catalysed reaction is Successive hydrolysis of beta-D-glucose units from the non-reducing ends of (1-&gt;3)-beta-D-glucans, releasing alpha-glucose.. The chain is Glucan 1,3-beta-glucosidase (EXG1) from Yarrowia lipolytica (strain CLIB 122 / E 150) (Yeast).